The chain runs to 681 residues: Kojibiose hydrolase (681 aa).

The signal sequence occupies residues 1 to 23; the sequence is MKKYIFNHVFFFLMLCGSNYLYS. 11 residues coordinate beta-D-glucose: R74, W343, D344, W391, E392, T407, E472, W473, K538, Q539, and D573. E472 functions as the Proton donor in the catalytic mechanism. The Proton acceptor role is filled by E616.

The protein belongs to the glycosyl hydrolase 65 family. Homohexamer; dimer of trimers.

It is found in the periplasm. The catalysed reaction is kojibiose + H2O = beta-D-glucose + D-glucose. Functionally, glycosidase that specifically hydrolyzes kojibiose to beta-glucose and glucose. Also hydrolyzes, with lower catalytic efficiency, longer kojioligosaccharides (from kojitriose to kojipentaose) and shorter oligosaccharides produced by the degradation of dextran-containing alpha-1,2 branches. Probably acts on alpha-(1-&gt;2)-glucosyl isomaltooligosaccharides. Shows weak activity with nigerose but has no activity toward p-nitrophenyl alpha-glucopyranoside, which is a general substrate of exo-acting alpha-glucoside hydrolases. Has a strict specificity for alpha-1,2-glucosidic linkages. Catalyzes the hydrolytic reaction via an anomer-inverting mechanism. The sequence is that of Kojibiose hydrolase from Flavobacterium johnsoniae (strain ATCC 17061 / DSM 2064 / JCM 8514 / BCRC 14874 / CCUG 350202 / NBRC 14942 / NCIMB 11054 / UW101) (Cytophaga johnsonae).